The primary structure comprises 368 residues: MAAAAEERMAEEGGGGQGDGGSSLASGSTQRQPPPPAPQHPQPGSQALPAPALAPDQLPQNNTLVALPIVAIENILSFMSYDEISQLRLVCKRMDLVCQRMLNQGFLKVERYHNLCQKQVKAQLPRRESERRNHSLARHADILAAVETRLSLLNMTFMKYVDSNLCCFIPGKVIDEIYRVLRYVNSTRAPQRAHEVLQELRDISSMAMEYFDEKIVPILKRKLPGSDVSGRLMGSPPVPGPSAALTTMQLFSKQNPSRQEVTKLQQQVKTNGAGVTVLRREISELRTKVQEQQKQLQDQDQKLLEQTQIIGEQNARLAELERKLREVMESAVGNSSGSGQNEESPRKRKKATEAIDSLRKSKRLRNRK.

Residues 1-11 are compositionally biased toward basic and acidic residues; the sequence is MAAAAEERMAE. The interval 1-56 is disordered; it reads MAAAAEERMAEEGGGGQGDGGSSLASGSTQRQPPPPAPQHPQPGSQALPAPALAPD. Gly residues predominate over residues 12-21; sequence EGGGGQGDGG. The span at 22-31 shows a compositional bias: low complexity; it reads SSLASGSTQR. Over residues 32–41 the composition is skewed to pro residues; sequence QPPPPAPQHP. Residues 42–56 are compositionally biased toward low complexity; that stretch reads QPGSQALPAPALAPD. Residues 61-109 form the F-box domain; it reads NNTLVALPIVAIENILSFMSYDEISQLRLVCKRMDLVCQRMLNQGFLKV. S235 and S242 each carry phosphoserine. T270 carries the phosphothreonine modification. The interval 328–368 is disordered; sequence MESAVGNSSGSGQNEESPRKRKKATEAIDSLRKSKRLRNRK. The segment covering 333-342 has biased composition (low complexity); that stretch reads GNSSGSGQNE. A Phosphoserine modification is found at S344.

As to quaternary structure, part of a SCF (SKP1-cullin-F-box) protein ligase complex.

It localises to the chromosome. It is found in the centromere. The protein localises to the kinetochore. Its function is as follows. Probably recognizes and binds to some phosphorylated proteins and promotes their ubiquitination and degradation. This Homo sapiens (Human) protein is F-box only protein 28 (FBXO28).